The following is a 129-amino-acid chain: Large ribosomal subunit protein uL22 (129 aa).

Belongs to the universal ribosomal protein uL22 family. As to quaternary structure, part of the 50S ribosomal subunit.

This protein binds specifically to 23S rRNA; its binding is stimulated by other ribosomal proteins, e.g. L4, L17, and L20. It is important during the early stages of 50S assembly. It makes multiple contacts with different domains of the 23S rRNA in the assembled 50S subunit and ribosome. In terms of biological role, the globular domain of the protein is located near the polypeptide exit tunnel on the outside of the subunit, while an extended beta-hairpin is found that lines the wall of the exit tunnel in the center of the 70S ribosome. The protein is Large ribosomal subunit protein uL22 of Agrobacterium fabrum (strain C58 / ATCC 33970) (Agrobacterium tumefaciens (strain C58)).